Reading from the N-terminus, the 505-residue chain is Glycerol kinase (505 aa).

Residue Thr17 participates in ADP binding. ATP-binding residues include Thr17, Thr18, and Ser19. Thr17 is a binding site for sn-glycerol 3-phosphate. Arg21 serves as a coordination point for ADP. Sn-glycerol 3-phosphate contacts are provided by Arg87, Glu88, Tyr139, and Asp250. Residues Arg87, Glu88, Tyr139, Asp250, and Gln251 each contribute to the glycerol site. Positions 272 and 315 each coordinate ADP. Residues Thr272, Gly315, Gln319, and Gly416 each coordinate ATP. The ADP site is built by Gly416 and Asn420.

Belongs to the FGGY kinase family.

The enzyme catalyses glycerol + ATP = sn-glycerol 3-phosphate + ADP + H(+). It participates in polyol metabolism; glycerol degradation via glycerol kinase pathway; sn-glycerol 3-phosphate from glycerol: step 1/1. With respect to regulation, inhibited by fructose 1,6-bisphosphate (FBP). Functionally, key enzyme in the regulation of glycerol uptake and metabolism. Catalyzes the phosphorylation of glycerol to yield sn-glycerol 3-phosphate. This is Glycerol kinase from Azotobacter vinelandii (strain DJ / ATCC BAA-1303).